A 520-amino-acid chain; its full sequence is CBL-interacting serine/threonine-protein kinase 18 (520 aa).

2 disordered regions span residues 1-29 and 48-67; these read MAQA…PHPK and TDKD…SPRN. Over residues 17–29 the composition is skewed to pro residues; sequence PDPPPPPPPPHPK. A compositionally biased stretch (low complexity) spans 55–66; that stretch reads SPQSPRSPRSPR. The Protein kinase domain occupies 74–328; the sequence is YELGKLLGHG…IPEIMKNRWF (255 aa). ATP is bound by residues 80–88 and Lys103; that span reads LGHGTFAKV. Catalysis depends on Asp196, which acts as the Proton acceptor. Positions 214 to 243 are activation loop; sequence DFGLSAVAEQLRQDGLCHTFCGTPAYIAPE. Ser218 bears the Phosphoserine mark. Thr232 carries the phosphothreonine modification. The disordered stretch occupies residues 349–368; it reads EDEEEEASSSGRSSTVSESD. Positions 356-366 are enriched in low complexity; sequence SSSGRSSTVSE. Positions 382-406 constitute an NAF domain; sequence PRPSSLNAFDIISFSSGFDLSGLFE. The tract at residues 410 to 439 is PPI; the sequence is GEGTRFVSGAPVSKIISKLEEIAKIVSFTV.

The protein belongs to the protein kinase superfamily. CAMK Ser/Thr protein kinase family. SNF1 subfamily. Interacts with CBL1 and CBL9. The cofactor is Mn(2+).

The enzyme catalyses L-seryl-[protein] + ATP = O-phospho-L-seryl-[protein] + ADP + H(+). The catalysed reaction is L-threonyl-[protein] + ATP = O-phospho-L-threonyl-[protein] + ADP + H(+). Its function is as follows. CIPK serine-threonine protein kinases interact with CBL proteins. Binding of a CBL protein to the regulatory NAF domain of CIPK protein lead to the activation of the kinase in a calcium-dependent manner. In Arabidopsis thaliana (Mouse-ear cress), this protein is CBL-interacting serine/threonine-protein kinase 18 (CIPK18).